The sequence spans 227 residues: Flagellar transcriptional regulator FtcR (227 aa).

One can recognise a Response regulatory domain in the interval 1 to 116; the sequence is MIVVVDDRDM…EILARINAIR (116 aa). Residues 127-226 constitute a DNA-binding region (ompR/PhoB-type); that stretch reads ADGTQLGPIR…KRFLGYCINI (100 aa).

In terms of biological role, required for transcription of flagellar genes. The polypeptide is Flagellar transcriptional regulator FtcR (ftcR) (Brucella abortus (strain 2308)).